Here is a 319-residue protein sequence, read N- to C-terminus: Melanoma-associated antigen B2 (319 aa).

A compositionally biased stretch (basic residues) spans 1–17; that stretch reads MPRGQKSKLRAREKRRK. The segment at 1 to 112 is disordered; the sequence is MPRGQKSKLR…TKSPSEDPLT (112 aa). 3 stretches are compositionally biased toward low complexity: residues 39–57, 67–79, and 94–105; these read PCCS…PAAG, TTAA…VSST, and ASSSQASTSTKS. Phosphoserine occurs at positions 77 and 105. The region spanning 111 to 310 is the MAGE domain; that stretch reads LTRKSGSLVQ…CAFPTHYEEA (200 aa).

As to quaternary structure, interacts with TRIM28. In terms of tissue distribution, expressed in testis and placenta, and in a significant fraction of tumors of various histologic types.

Its function is as follows. May enhance ubiquitin ligase activity of RING-type zinc finger-containing E3 ubiquitin-protein ligases. Proposed to act through recruitment and/or stabilization of the Ubl-conjugating enzyme (E2) at the E3:substrate complex. The sequence is that of Melanoma-associated antigen B2 (MAGEB2) from Homo sapiens (Human).